The chain runs to 184 residues: Ras-related protein Rap1 (184 aa).

10-17 serves as a coordination point for GTP; sequence GSGGVGKS. Positions 32–40 match the Effector region motif; the sequence is YDPTIEDSY. Residues 57-61 and 116-119 contribute to the GTP site; these read DTAGT and NKCD. Cysteine 181 carries the post-translational modification Cysteine methyl ester. A lipid anchor (S-geranylgeranyl cysteine) is attached at cysteine 181. The propeptide at 182-184 is removed in mature form; that stretch reads VLL.

It belongs to the small GTPase superfamily. Ras family.

Its subcellular location is the cell membrane. It carries out the reaction GTP + H2O = GDP + phosphate + H(+). Alternates between an inactive form bound to GDP and an active form bound to GTP. Activated by a guanine nucleotide-exchange factor (GEF) and inactivated by a GTPase-activating protein (GAP). Its function is as follows. Ras proteins bind GDP/GTP and possess intrinsic GTPase activity. Plays a role in photoreceptor cell determination. The polypeptide is Ras-related protein Rap1 (Drosophila melanogaster (Fruit fly)).